We begin with the raw amino-acid sequence, 144 residues long: Large ribosomal subunit protein uL15 (144 aa).

The segment at 1–54 is disordered; that stretch reads MRLNTLSPAEGSKKAGKRLGRGIGSGLGKTGGRGHKGQKSRSGGGVRRGFEGGQ. The segment covering 21-31 has biased composition (gly residues); it reads RGIGSGLGKTG.

Belongs to the universal ribosomal protein uL15 family. Part of the 50S ribosomal subunit.

Its function is as follows. Binds to the 23S rRNA. The chain is Large ribosomal subunit protein uL15 from Escherichia coli (strain K12 / MC4100 / BW2952).